The primary structure comprises 555 residues: uncharacterized protein (555 aa).

Residues 1–83 (MSNEDETTRL…GRRKLLCLYG (83 aa)) are Extracellular-facing. Residues 84-104 (LVMIICIAESISMTATIPLVM) traverse the membrane as a helical segment. The Cytoplasmic segment spans residues 105-125 (DKVAEGISDENGHYDSVAVQT). Residues 126–146 (IVSSISSSTMMIAGAISIFMA) traverse the membrane as a helical segment. Residues 147-188 (GKWGELSDRIGRVRVFKYMSGIRVIGLLTHVFTLSSKMKYHK) lie on the Extracellular side of the membrane. A helical transmembrane segment spans residues 189–209 (WAIVLTACIVPSFGGLFALVA). The Cytoplasmic portion of the chain corresponds to 210 to 229 (NGNSYVSDIVKTEHRMVTIG). The chain crosses the membrane as a helical span at residues 230–250 (IMMSCIYATMGVGPMFGSFLV). The Extracellular portion of the chain corresponds to 251 to 257 (KWTHGNG). Residues 258-278 (FIPIYTSIAFVILALIICETI) form a helical membrane-spanning segment. The Cytoplasmic portion of the chain corresponds to 279 to 356 (MVEPRHETQM…LVPRHTVILL (78 aa)). The segment at 289-311 (AHSQSTYTKRREKLRSQSGSDDA) is disordered. The chain crosses the membrane as a helical span at residues 357-377 (IVLDILFVCGTTSCMPALILF). Residues 378–386 (STYEYKWHA) are Extracellular-facing. The chain crosses the membrane as a helical span at residues 387–407 (VELGYFISILGIGRGVVLLVV). Over 408-428 (SPTLLYTLKRIYQHLNHSIDK) the chain is Cytoplasmic. A helical membrane pass occupies residues 429–449 (IDIFCIQFSMIVITLSLFVMI). Residues 450–459 (RFGEKTPTSM) are Extracellular-facing. Residues 460–480 (IIFALLQALSAFCSPTLQSGI) traverse the membrane as a helical segment. The Cytoplasmic segment spans residues 481–491 (IKYTSKKHTGE). Residues 492-512 (MFGAMALVRSCVMLVIPPILL) form a helical membrane-spanning segment. At 513 to 523 (KLYGSTVSVNP) the chain is on the extracellular side. The chain crosses the membrane as a helical span at residues 524–544 (SLFMYIPFSTSIVAILLTFFL). Topologically, residues 545–555 (RIYKNPPLDGP) are cytoplasmic.

Its subcellular location is the membrane. This is an uncharacterized protein from Saccharomyces cerevisiae (strain ATCC 204508 / S288c) (Baker's yeast).